A 315-amino-acid polypeptide reads, in one-letter code: MNSNAAQTEQPMKHNGNRMTVKDFIILAKPGIIISNSLAALGGFWIAWIQSERTGGGPGIFAAMAVAMIGTALVMASSTVFNNFFDRGMDAKMARTRTRASVTGKIPPPVMILYGTCLGACGFIMLASLNVLTAVLGLLAFLLYAVVYTLWFKRHSVLSTFVGSFPGAAPPLIGYCALTGYIDMPAILLYAIMFLWQPPHFWAIGIRRKEEYRAAGIPLLPIIKGNRATKIKMLRYTAVLTAVSLLVPLYIDVSPFYTASALLLGAIWLYRSVKGFQAADDTQWSKGMFFYSIVYFSLLFLILMADSFINAVLRT.

8 consecutive transmembrane segments (helical) span residues 30 to 50 (PGIIISNSLAALGGFWIAWIQ), 56 to 76 (GGPGIFAAMAVAMIGTALVMA), 106 to 126 (IPPPVMILYGTCLGACGFIML), 132 to 152 (LTAVLGLLAFLLYAVVYTLWF), 162 to 182 (VGSFPGAAPPLIGYCALTGYI), 186 to 206 (AILLYAIMFLWQPPHFWAIGI), 249 to 269 (LYIDVSPFYTASALLLGAIWL), and 289 to 309 (FFYSIVYFSLLFLILMADSFI).

The protein belongs to the UbiA prenyltransferase family. Protoheme IX farnesyltransferase subfamily. In terms of assembly, interacts with CtaA.

The protein resides in the cell membrane. It catalyses the reaction heme b + (2E,6E)-farnesyl diphosphate + H2O = Fe(II)-heme o + diphosphate. It participates in porphyrin-containing compound metabolism; heme O biosynthesis; heme O from protoheme: step 1/1. Its function is as follows. Converts heme B (protoheme IX) to heme O by substitution of the vinyl group on carbon 2 of heme B porphyrin ring with a hydroxyethyl farnesyl side group. This is Protoheme IX farnesyltransferase 1 from Bacillus velezensis (strain DSM 23117 / BGSC 10A6 / LMG 26770 / FZB42) (Bacillus amyloliquefaciens subsp. plantarum).